The chain runs to 246 residues: MAGKEVIFIMALFIAVESSPIFSFDDLVCPSVTSLRVNVEKNECSTKKDCGRNLCCENQNKINVCVGGIMPLPKPNLDVNNIGGAVSESVKQKRETAESLSGSFDKEKASAENLSGSFDQQKSSVDEKSGSVGQQKGAVEGQSGSGEQRRETAESQSGSVDQEKASAENLSGSIDKQKVTVEEKSEPAQGQSGSVKQKRKTTENVSGSLDQEKASAESLSGSFDQQKSSVDEKSGSVGNDDDISVQ.

The first 20 residues, 1–20, serve as a signal peptide directing secretion; the sequence is MAGKEVIFIMALFIAVESSP. 7 tandem repeats follow at residues 83–96, 97–110, 111–124, 125–138, 139–152, 153–166, and 167–180. The 12 X approximate tandem repeats of [AV][DE]X[VL]SGSX[DE]QX[KR]X[ST] stretch occupies residues 83–243; sequence GGAVSESVKQ…SGSVGNDDDI (161 aa). The segment at 88-246 is disordered; that stretch reads ESVKQKRETA…VGNDDDISVQ (159 aa). The segment covering 112–123 has biased composition (polar residues); sequence ENLSGSFDQQKS. A compositionally biased stretch (basic and acidic residues) spans 175–186; sequence DKQKVTVEEKSE. The 8; half-length repeat unit spans residues 181–187; the sequence is VEEKSEP. 4 repeat units span residues 188–201, 202–215, 216–229, and 230–243. Residues 217 to 228 are compositionally biased toward polar residues; that stretch reads ESLSGSFDQQKS.

In terms of tissue distribution, expressed by the venom gland.

It localises to the secreted. The protein is 33kDa venom protein of Chelonus sp. nr. curvimaculatus (Parasitic wasp).